Consider the following 156-residue polypeptide: Arginine repressor (156 aa).

It belongs to the ArgR family.

It localises to the cytoplasm. Its pathway is amino-acid biosynthesis; L-arginine biosynthesis [regulation]. Its function is as follows. Regulates arginine biosynthesis genes. The polypeptide is Arginine repressor (Vibrio campbellii (strain ATCC BAA-1116)).